Here is a 653-residue protein sequence, read N- to C-terminus: Testicular spindle-associated protein SHCBP1L (653 aa).

The disordered stretch occupies residues 1–65 (MASGSKASVP…PVKGKAGRET (65 aa)). S8 carries the phosphoserine modification. Over residues 28–41 (SAVSGDTAAATTLK) the composition is skewed to polar residues. Residues 46–56 (PVRSVVASPRP) show a composition bias toward low complexity. The residue at position 53 (S53) is a Phosphoserine. The stretch at 299 to 326 (IAQRFKKTLEKYKNKRVELIEYQSNIKE) forms a coiled coil. PbH1 repeat units follow at residues 493–514 (SGHMTLENCILKCEGTGVCVLT), 515–537 (GAALTITDSEITGAQGAGVELYP), 538–571 (GSIAILERNEIHHCNNLRTSNSSKSTLGGVNMKV), and 574–596 (APKLKMTNNHIYSNKGYGVSILQ). At K570 the chain carries N6-acetyllysine. An N6-acetyllysine modification is found at K645.

As to quaternary structure, interacts with HSPA2; this interaction may promote the recruitment of HSPA2 to the spindle. In terms of tissue distribution, expressed in spermatocytes and elongating spermatids inside the seminiferous tubules (at protein level). Testis-specific.

It is found in the cytoplasm. The protein resides in the cytoskeleton. The protein localises to the spindle. Its function is as follows. Testis-specific spindle-associated factor that plays a role in spermatogenesis. In association with HSPA2, participates in the maintenance of spindle integrity during meiosis in male germ cells. In Homo sapiens (Human), this protein is Testicular spindle-associated protein SHCBP1L.